Reading from the N-terminus, the 125-residue chain is Large ribosomal subunit protein mL51 (125 aa).

The transit peptide at 1–29 (MWSVQQLLWGCRSLLTQGCRSFSLGSRDL) directs the protein to the mitochondrion.

The protein belongs to the mitochondrion-specific ribosomal protein mL51 family. In terms of assembly, component of the mitochondrial ribosome large subunit (39S) which comprises a 16S rRNA and about 50 distinct proteins.

It is found in the mitochondrion. In Xenopus tropicalis (Western clawed frog), this protein is Large ribosomal subunit protein mL51 (mrpl51).